A 269-amino-acid chain; its full sequence is Serine/threonine-protein kinase ZRK7 (269 aa).

The region spanning 80 to 269 is the Protein kinase domain; the sequence is FDWSYAIGVD…KNRLMVTVIT (190 aa). Residues 86–94 and K106 contribute to the ATP site; that span reads IGVDRFVWY. Residue D205 is the Proton acceptor of the active site.

This sequence belongs to the protein kinase superfamily. Ser/Thr protein kinase family. ZRK subfamily.

It catalyses the reaction L-seryl-[protein] + ATP = O-phospho-L-seryl-[protein] + ADP + H(+). The enzyme catalyses L-threonyl-[protein] + ATP = O-phospho-L-threonyl-[protein] + ADP + H(+). In Arabidopsis thaliana (Mouse-ear cress), this protein is Serine/threonine-protein kinase ZRK7.